A 447-amino-acid chain; its full sequence is Methylenetetrahydrofolate--tRNA-(uracil-5-)-methyltransferase TrmFO (447 aa).

9–14 (GGGLAG) is a binding site for FAD.

It belongs to the MnmG family. TrmFO subfamily. The cofactor is FAD.

Its subcellular location is the cytoplasm. It carries out the reaction uridine(54) in tRNA + (6R)-5,10-methylene-5,6,7,8-tetrahydrofolate + NADH + H(+) = 5-methyluridine(54) in tRNA + (6S)-5,6,7,8-tetrahydrofolate + NAD(+). The catalysed reaction is uridine(54) in tRNA + (6R)-5,10-methylene-5,6,7,8-tetrahydrofolate + NADPH + H(+) = 5-methyluridine(54) in tRNA + (6S)-5,6,7,8-tetrahydrofolate + NADP(+). Catalyzes the folate-dependent formation of 5-methyl-uridine at position 54 (M-5-U54) in all tRNAs. This Paramagnetospirillum magneticum (strain ATCC 700264 / AMB-1) (Magnetospirillum magneticum) protein is Methylenetetrahydrofolate--tRNA-(uracil-5-)-methyltransferase TrmFO.